A 404-amino-acid chain; its full sequence is Formate-dependent phosphoribosylglycinamide formyltransferase (404 aa).

N(1)-(5-phospho-beta-D-ribosyl)glycinamide-binding positions include 25–26 and Glu-85; that span reads EL. Residues Arg-118, Lys-159, 164–169, 199–202, and Glu-207 each bind ATP; these read SSGKGQ and EGFV. One can recognise an ATP-grasp domain in the interval 123 to 318; sequence RLAAEELGLP…EFELHARAIL (196 aa). Glu-277 and Glu-289 together coordinate Mg(2+). Residues Asp-296, Lys-365, and 372 to 373 contribute to the N(1)-(5-phospho-beta-D-ribosyl)glycinamide site; that span reads RR.

It belongs to the PurK/PurT family. Homodimer.

The enzyme catalyses N(1)-(5-phospho-beta-D-ribosyl)glycinamide + formate + ATP = N(2)-formyl-N(1)-(5-phospho-beta-D-ribosyl)glycinamide + ADP + phosphate + H(+). Its pathway is purine metabolism; IMP biosynthesis via de novo pathway; N(2)-formyl-N(1)-(5-phospho-D-ribosyl)glycinamide from N(1)-(5-phospho-D-ribosyl)glycinamide (formate route): step 1/1. Involved in the de novo purine biosynthesis. Catalyzes the transfer of formate to 5-phospho-ribosyl-glycinamide (GAR), producing 5-phospho-ribosyl-N-formylglycinamide (FGAR). Formate is provided by PurU via hydrolysis of 10-formyl-tetrahydrofolate. This is Formate-dependent phosphoribosylglycinamide formyltransferase from Burkholderia cenocepacia (strain HI2424).